The following is a 577-amino-acid chain: Autophagy-related protein 20 (577 aa).

The tract at residues 57–81 is disordered; the sequence is GQSYVAPHSGGGRTSSGSSSSASLQ. The region spanning 95 to 239 is the PX domain; sequence GEQGRVRILE…DFLDPNNANW (145 aa). A 1,2-diacyl-sn-glycero-3-phospho-(1D-myo-inositol-3-phosphate) is bound by residues arginine 131, serine 133, lysine 157, and arginine 205.

The protein belongs to the sorting nexin family.

It is found in the endosome membrane. Its subcellular location is the preautophagosomal structure membrane. Its function is as follows. Required for cytoplasm to vacuole transport (Cvt), pexophagy and mitophagy. Also involved in endoplasmic reticulum-specific autophagic process and is essential for the survival of cells subjected to severe ER stress. Functions in protein retrieval from the endocytic pathway. This is Autophagy-related protein 20 (ATG20) from Eremothecium gossypii (strain ATCC 10895 / CBS 109.51 / FGSC 9923 / NRRL Y-1056) (Yeast).